A 469-amino-acid chain; its full sequence is DNA repair and recombination protein rad22 (469 aa).

A disordered region spans residues 265–296 (PAANNHHSEKAGTQINNKDKGSHNSAKPVQRS). The segment covering 287 to 296 (HNSAKPVQRS) has biased composition (polar residues). Ser296 and Ser319 each carry phosphoserine. Residues 429-469 (LHDSTTSHNKSDLMRTNSDPQSAMRSRENYDATVDKKAKKG) form a disordered region. Polar residues predominate over residues 431–452 (DSTTSHNKSDLMRTNSDPQSAM). The span at 453–469 (RSRENYDATVDKKAKKG) shows a compositional bias: basic and acidic residues.

This sequence belongs to the RAD52 family. In terms of assembly, interacts with rhp51.

It localises to the nucleus. In terms of biological role, active in the repair of DNA damage and in mating-type switching. Probably involved in the repair of DNA double-strands breaks. Has a role in promoting S phase completion. The chain is DNA repair and recombination protein rad22 (rad22) from Schizosaccharomyces pombe (strain 972 / ATCC 24843) (Fission yeast).